The primary structure comprises 620 residues: Glutathione-regulated potassium-efflux system protein KefC (620 aa).

12 consecutive transmembrane segments (helical) span residues 4 to 24 (HTLI…PIAV), 26 to 46 (LGLG…PWGL), 54 to 74 (SILH…GLEL), 90 to 110 (GALQ…LLGL), 114 to 134 (VAEL…MQAM), 149 to 169 (FAVL…IPLL), 178 to 198 (MGAF…VVLL), 218 to 238 (VFSA…EEVG), 270 to 290 (GLLL…GTLI), 294 to 314 (LRIV…LWLI), 327 to 347 (WFAV…GAAQ), and 359 to 379 (SLTL…VILN). In terms of domain architecture, RCK N-terminal spans 399–518 (QPRVIIAGFG…AGVEKPERET (120 aa)). The segment at 597 to 620 (GWQGTEEGKHTGNMADEPETKPSS) is disordered.

The protein belongs to the monovalent cation:proton antiporter 2 (CPA2) transporter (TC 2.A.37) family. KefC subfamily. In terms of assembly, homodimer. Interacts with the regulatory subunit KefF.

Its subcellular location is the cell inner membrane. Functionally, pore-forming subunit of a potassium efflux system that confers protection against electrophiles. Catalyzes K(+)/H(+) antiport. This chain is Glutathione-regulated potassium-efflux system protein KefC, found in Escherichia coli O45:K1 (strain S88 / ExPEC).